We begin with the raw amino-acid sequence, 191 residues long: Large ribosomal subunit protein bL9 (191 aa).

The interval 149-191 (EEAERQSKGESLTSADAIYGVDEDALRPEDFFDPEADGNEDDE) is disordered. Acidic residues predominate over residues 179-191 (FFDPEADGNEDDE).

Belongs to the bacterial ribosomal protein bL9 family.

Its function is as follows. Binds to the 23S rRNA. The polypeptide is Large ribosomal subunit protein bL9 (rplI) (Agrobacterium fabrum (strain C58 / ATCC 33970) (Agrobacterium tumefaciens (strain C58))).